The chain runs to 911 residues: Protein translocase subunit SecA (911 aa).

ATP is bound by residues Q87, 105 to 109 (GEGKT), and D512. Positions 865–892 (AAEQDGAEEGAVATATAPVRSENKVGRN) are disordered. The span at 873-883 (EGAVATATAPV) shows a compositional bias: low complexity. Zn(2+)-binding residues include C895, C897, C906, and H907.

It belongs to the SecA family. As to quaternary structure, monomer and homodimer. Part of the essential Sec protein translocation apparatus which comprises SecA, SecYEG and auxiliary proteins SecDF-YajC and YidC. It depends on Zn(2+) as a cofactor.

Its subcellular location is the cell inner membrane. The protein localises to the cytoplasm. It carries out the reaction ATP + H2O + cellular proteinSide 1 = ADP + phosphate + cellular proteinSide 2.. In terms of biological role, part of the Sec protein translocase complex. Interacts with the SecYEG preprotein conducting channel. Has a central role in coupling the hydrolysis of ATP to the transfer of proteins into and across the cell membrane, serving both as a receptor for the preprotein-SecB complex and as an ATP-driven molecular motor driving the stepwise translocation of polypeptide chains across the membrane. The protein is Protein translocase subunit SecA of Ectopseudomonas mendocina (strain ymp) (Pseudomonas mendocina).